Here is a 520-residue protein sequence, read N- to C-terminus: 6-phosphofructo-2-kinase/fructose-2,6-bisphosphatase 3 (520 aa).

A 6-phosphofructo-2-kinase region spans residues 1–245 (MPLELTQSRV…VYYLMNIHVQ (245 aa)). 42–50 (GLPARGKTY) contributes to the ATP binding site. Residues Arg75 and Arg99 each coordinate beta-D-fructose 6-phosphate. The active site involves Asp125. Beta-D-fructose 6-phosphate is bound by residues Thr127 and Arg133. The active site involves Cys155. 164–169 (NIMEVK) is a binding site for ATP. Beta-D-fructose 6-phosphate is bound by residues Lys169, Arg190, and Tyr194. Residues 246–520 (PRTIYLCRHG…RSSADSSRKH (275 aa)) are fructose-2,6-bisphosphatase. Arg253 provides a ligand contact to beta-D-fructose 2,6-bisphosphate. The Tele-phosphohistidine intermediate role is filled by His254. Beta-D-fructose 2,6-bisphosphate-binding residues include Asn260 and Gly266. The Proton donor/acceptor role is filled by Glu323. The beta-D-fructose 2,6-bisphosphate site is built by Tyr334, Arg348, Lys352, Tyr363, Gln389, and Arg393. Residue 345-348 (YALR) coordinates ATP. Residues 389–393 (QAVLR) and Tyr425 each bind ATP. The segment at 443–520 (RERSEDAKKG…RSSADSSRKH (78 aa)) is disordered. Position 461 is a phosphoserine; by AMPK (Ser461). Thr463 is subject to Phosphothreonine. Residue Ser467 is modified to Phosphoserine. Thr471 is subject to Phosphothreonine; by PKC. Positions 502-520 (LPGQNMKGSRSSADSSRKH) are enriched in polar residues.

The protein in the C-terminal section; belongs to the phosphoglycerate mutase family. In terms of assembly, homodimer. Forms a heterodimer with PFKFB2. Phosphorylation by AMPK stimulates activity. As to expression, ubiquitous.

It carries out the reaction beta-D-fructose 2,6-bisphosphate + H2O = beta-D-fructose 6-phosphate + phosphate. It catalyses the reaction beta-D-fructose 6-phosphate + ATP = beta-D-fructose 2,6-bisphosphate + ADP + H(+). In terms of biological role, catalyzes both the synthesis and degradation of fructose 2,6-bisphosphate. In Homo sapiens (Human), this protein is 6-phosphofructo-2-kinase/fructose-2,6-bisphosphatase 3 (PFKFB3).